The chain runs to 511 residues: V-type proton ATPase subunit B, brain isoform (511 aa).

Arg-400 lines the ATP pocket.

Belongs to the ATPase alpha/beta chains family. As to quaternary structure, V-ATPase is a heteromultimeric enzyme made up of two complexes: the ATP-hydrolytic V1 complex and the proton translocation V0 complex. The V1 complex consists of three catalytic AB heterodimers that form a heterohexamer, three peripheral stalks each consisting of EG heterodimers, one central rotor including subunits D and F, and the regulatory subunits C and H. The proton translocation complex V0 consists of the proton transport subunit a, a ring of proteolipid subunits c9c'', rotary subunit d, subunits e and f, and the accessory subunits ATP6AP1/Ac45 and ATP6AP2/PRR. As to expression, kidney; localizes to early distal nephron, encompassing thick ascending limbs and distal convoluted tubules (at protein level).

It is found in the apical cell membrane. The protein localises to the melanosome. Its subcellular location is the cytoplasm. The protein resides in the cytoplasmic vesicle. It localises to the secretory vesicle. It is found in the synaptic vesicle membrane. The protein localises to the clathrin-coated vesicle membrane. Non-catalytic subunit of the V1 complex of vacuolar(H+)-ATPase (V-ATPase), a multisubunit enzyme composed of a peripheral complex (V1) that hydrolyzes ATP and a membrane integral complex (V0) that translocates protons. V-ATPase is responsible for acidifying and maintaining the pH of intracellular compartments and in some cell types, is targeted to the plasma membrane, where it is responsible for acidifying the extracellular environment. In renal intercalated cells, can partially compensate the lack of ATP6V1B1 and mediate secretion of protons (H+) into the urine under base-line conditions but not in conditions of acid load. This Homo sapiens (Human) protein is V-type proton ATPase subunit B, brain isoform (ATP6V1B2).